Consider the following 475-residue polypeptide: Doublecortin domain-containing protein 2 (475 aa).

Doublecortin domains follow at residues 17–100 (KSVL…LNYL) and 139–221 (CTIF…LPYS). Positions 234–475 (YGQKASSLPP…EANKASSAVA (242 aa)) are disordered. A compositionally biased stretch (polar residues) spans 252-272 (GSGNYRQSKSTIGSSDNSSPQ). Phosphoserine is present on serine 270. Basic and acidic residues predominate over residues 353 to 365 (EKTSKDANQKEDF). Residues 407–425 (TDEENGEELDQVAEELQPT) show a composition bias toward acidic residues.

As to quaternary structure, interacts with DVL1, DVL2 and DVL3. As to expression, expressed in hair cells of the inner ear.

The protein localises to the cell projection. Its subcellular location is the cilium. The protein resides in the cytoplasm. It localises to the cytoskeleton. It is found in the cilium axoneme. The protein localises to the kinocilium. Functionally, protein that plays a role in the inhibition of canonical Wnt signaling pathway. May be involved in neuronal migration during development of the cerebral neocortex. Involved in the control of ciliogenesis and ciliary length. This is Doublecortin domain-containing protein 2 (Dcdc2) from Mus musculus (Mouse).